A 91-amino-acid polypeptide reads, in one-letter code: Cell division protein ZapA (91 aa).

Residues 58 to 91 adopt a coiled-coil conformation; sequence LTAVNIASEYLKLKEEYNRLREQLKKEKDGERDD.

It belongs to the ZapA family. Type 2 subfamily. As to quaternary structure, homodimer. Interacts with FtsZ.

The protein localises to the cytoplasm. Functionally, activator of cell division through the inhibition of FtsZ GTPase activity, therefore promoting FtsZ assembly into bundles of protofilaments necessary for the formation of the division Z ring. It is recruited early at mid-cell but it is not essential for cell division. This is Cell division protein ZapA from Geobacillus kaustophilus (strain HTA426).